A 657-amino-acid chain; its full sequence is Histidine ammonia-lyase (657 aa).

A cross-link (5-imidazolinone (Ala-Gly)) is located at residues 253–255 (ASG). Serine 254 is modified (2,3-didehydroalanine (Ser)). Threonine 396 bears the Phosphothreonine mark. Residue serine 635 is modified to Phosphoserine. Threonine 637 carries the post-translational modification Phosphothreonine. Residue serine 648 is modified to Phosphoserine.

This sequence belongs to the PAL/histidase family. Contains an active site 4-methylidene-imidazol-5-one (MIO), which is formed autocatalytically by cyclization and dehydration of residues Ala-Ser-Gly.

It catalyses the reaction L-histidine = trans-urocanate + NH4(+). It participates in amino-acid degradation; L-histidine degradation into L-glutamate; N-formimidoyl-L-glutamate from L-histidine: step 1/3. In Homo sapiens (Human), this protein is Histidine ammonia-lyase (HAL).